The primary structure comprises 407 residues: Arginine deiminase (407 aa).

C397 (amidino-cysteine intermediate) is an active-site residue.

It belongs to the arginine deiminase family.

It localises to the cytoplasm. It carries out the reaction L-arginine + H2O = L-citrulline + NH4(+). It functions in the pathway amino-acid degradation; L-arginine degradation via ADI pathway; carbamoyl phosphate from L-arginine: step 1/2. The sequence is that of Arginine deiminase from Escherichia coli O81 (strain ED1a).